Consider the following 607-residue polypeptide: CRISPR-associated DNA-binding protein Cas12m (607 aa).

The tract at residues 1–16 is wedge domain (WED-N); the sequence is MTRVTVQTAGVHYKWQ. The recognition domain (REC) stretch occupies residues 17-189; that stretch reads MPDQLTQQLR…QLRHHRWDGT (173 aa). The segment at 50–124 is roof in REC; the sequence is WSSYPAVAAL…IASVRDEATE (75 aa). The span at 74–83 shows a compositional bias: basic and acidic residues; sequence ASTVKEEKSR. Positions 74–94 are disordered; it reads ASTVKEEKSRQRTKRPSHPAV. The tract at residues 190–315 is wedge domain (WED-C); it reads GTISVQLQRQ…KIPDQGEVDE (126 aa). Residues 316–559 form a ruvC-I region; it reads GPTIAVHLGW…TVSHTGLSRV (244 aa). Residues 391–452 are ruvC insertion; sequence SIRDTLVAWL…EGADIAETLE (62 aa). The target nucleic-acid binding (TNB) stretch occupies residues 552 to 588; it reads SHTGLSRVHAACGHENPADDRYLMQPVLCDGCGRTYD. Zn(2+) contacts are provided by histidine 560, cysteine 563, cysteine 580, and cysteine 583. Residues 589–607 are ruvC-II; that stretch reads TDLSATILMLQRASAATSN. Aspartate 590 lines the Mg(2+) pocket.

The protein belongs to the CRISPR-associated DNA-binding protein Cas12m family. As to quaternary structure, binds crRNA and target dsDNA as a monomer. It depends on Mg(2+) as a cofactor. Zn(2+) is required as a cofactor.

In terms of biological role, CRISPR (clustered regularly interspaced short palindromic repeat), is an adaptive immune system that provides protection against mobile genetic elements (viruses, transposable elements and conjugative plasmids). CRISPR clusters contain sequences complementary to antecedent mobile elements and target invading nucleic acids. CRISPR clusters are transcribed and processed into CRISPR RNA (crRNA). Recognizes a short motif in the CRISPR repeat sequences (the 5' PAM or protospacer adjacent motif, 5'-TTN-3' in this organism) to help distinguish self versus nonself, as targets within the bacterial CRISPR locus do not have PAMs. Upon expression in E.coli as a CRISPR locus inhibits plasmid propagation when targeted to regions essential for plasmid propagation (replication origin and a selectable marker); inhibits expression of a non-selectable marker, probably at the transcriptional level. Protects E.coli against bacteriophage M13mp18, to a lesser extent against lambda and VpaE1 as well as phage T4 with hydroxymethyl or unmodified (but not glycosylated) cytosines. Preferentially binds to its associated crRNA. Cas12m-crRNA binds DNA in a PAM-dependent, crRNA-guided fashion. Binds a 20-bp crRNA-ss-target DNA heteroduplex, in a 52 nucleotide crRNA. No dsDNA, ssDNA or RNA nuclease activity is seen for the crRNA-Cas12m complex. Probably required for pre-crRNA processing to mature crRNA. The polypeptide is CRISPR-associated DNA-binding protein Cas12m (Gordonia otitidis (strain DSM 44809 / CCUG 52243 / JCM 12355 / NBRC 100426 / IFM 10032)).